Consider the following 443-residue polypeptide: Probable nitrate/nitrite antiporter NarK2 (443 aa).

Transmembrane regions (helical) follow at residues I32–V52, L66–F86, H95–V115, W123–M143, I172–G192, N210–L230, S256–I276, Y292–D312, L314–V334, F346–S366, V383–A403, and T409–L429.

Belongs to the major facilitator superfamily. Nitrate/nitrite porter (TC 2.A.1.8) family.

It localises to the cell membrane. It catalyses the reaction nitrate(in) + nitrite(out) = nitrate(out) + nitrite(in). Probable nitrate/nitrite antiporter that may be involved in nitrate import and nitrite export during anaerobic growth. The chain is Probable nitrate/nitrite antiporter NarK2 from Thermus thermophilus.